The sequence spans 104 residues: Large ribosomal subunit protein uL24 (104 aa).

This sequence belongs to the universal ribosomal protein uL24 family. Part of the 50S ribosomal subunit.

Functionally, one of two assembly initiator proteins, it binds directly to the 5'-end of the 23S rRNA, where it nucleates assembly of the 50S subunit. Its function is as follows. One of the proteins that surrounds the polypeptide exit tunnel on the outside of the subunit. The sequence is that of Large ribosomal subunit protein uL24 from Rhodopseudomonas palustris (strain BisB18).